Here is a 327-residue protein sequence, read N- to C-terminus: 2-keto-3-deoxygluconate permease (327 aa).

10 helical membrane passes run 10–30, 42–62, 73–93, 95–115, 139–159, 163–183, 199–219, 224–244, 254–274, and 289–309; these read IPGGMMLVPLFLGALCHTFSP, GMITGTVPILAVWFFCMGASI, KSGTLVVTKIAVAWVVAAIAS, IIPEHGVEVGFFAGLSTLALV, AGAFVLMSLESGPLMTMIILG, IASFEPHVFVGAVLPFLVGFA, VQTLIPFFAFALGNTIDLTVI, LLGILLGVAVIIVTGIPLIIA, TAGIAASSSAGAAVATPVLIA, and SLVATAVIVTSILVPILTSIW.

The protein belongs to the KdgT transporter family.

Its subcellular location is the cell inner membrane. The enzyme catalyses 2-dehydro-3-deoxy-D-gluconate(in) + H(+)(in) = 2-dehydro-3-deoxy-D-gluconate(out) + H(+)(out). In terms of biological role, catalyzes the proton-dependent uptake of 2-keto-3-deoxygluconate (KDG) into the cell. This Escherichia coli O127:H6 (strain E2348/69 / EPEC) protein is 2-keto-3-deoxygluconate permease.